A 193-amino-acid polypeptide reads, in one-letter code: NADH-quinone oxidoreductase subunit B (193 aa).

[4Fe-4S] cluster is bound by residues C72, C73, C137, and C167.

Belongs to the complex I 20 kDa subunit family. NDH-1 is composed of 14 different subunits. Subunits NuoB, C, D, E, F, and G constitute the peripheral sector of the complex. [4Fe-4S] cluster is required as a cofactor.

The protein resides in the cell inner membrane. The catalysed reaction is a quinone + NADH + 5 H(+)(in) = a quinol + NAD(+) + 4 H(+)(out). Functionally, NDH-1 shuttles electrons from NADH, via FMN and iron-sulfur (Fe-S) centers, to quinones in the respiratory chain. Couples the redox reaction to proton translocation (for every two electrons transferred, four hydrogen ions are translocated across the cytoplasmic membrane), and thus conserves the redox energy in a proton gradient. The sequence is that of NADH-quinone oxidoreductase subunit B from Brucella abortus (strain S19).